The primary structure comprises 374 residues: Isocitrate dehydrogenase [NAD] catalytic subunit 5, mitochondrial (374 aa).

The N-terminal 44 residues, 1–44, are a transit peptide targeting the mitochondrion; sequence MTMAANLARRLIGNRSTQILGAVNSSSGAASSVARAFCSSTTPI. Substrate is bound by residues Arg-127, Arg-137, Arg-158, and Asp-245. Residues Asp-245, Asp-269, and Asp-273 each contribute to the Mg(2+) site.

This sequence belongs to the isocitrate and isopropylmalate dehydrogenases family. In terms of assembly, heterooligomer of catalytic and regulatory subunits. Mg(2+) is required as a cofactor. The cofactor is Mn(2+). In terms of tissue distribution, ubiquitous.

It is found in the mitochondrion. It carries out the reaction D-threo-isocitrate + NAD(+) = 2-oxoglutarate + CO2 + NADH. Functionally, performs an essential role in the oxidative function of the citric acid cycle. This chain is Isocitrate dehydrogenase [NAD] catalytic subunit 5, mitochondrial (IDH5), found in Arabidopsis thaliana (Mouse-ear cress).